The primary structure comprises 139 residues: Bilirubin-inducible fluorescent protein UnaG (139 aa).

(4Z,15Z)-bilirubin IXalpha contacts are provided by residues asparagine 57, threonine 61, serine 80, arginine 112, and 132-134 (RSY).

Belongs to the calycin superfamily. Fatty-acid binding protein (FABP) family. Monomer. Detected in small-diameter muscle fibers from the white muscle layer from juvenile animals (glass eels) (at protein level). Detected in small-diameter muscle fibers from juvenile animals (glass eels).

The protein resides in the cytoplasm. In terms of biological role, beta-barrel protein that binds unconjugated bilirubin with high affinity. Excitation of the bilirubin-bound protein gives rise to green fluorescence, both under normoxia and hypoxia. The apoprotein is not fluorescent. Does not emit fluorescence in the presence of ditauro-bilirubin, urobilin or biliverdin. The sequence is that of Bilirubin-inducible fluorescent protein UnaG from Anguilla japonica (Japanese eel).